Reading from the N-terminus, the 186-residue chain is ATP synthase subunit delta (186 aa).

The protein belongs to the ATPase delta chain family. In terms of assembly, F-type ATPases have 2 components, F(1) - the catalytic core - and F(0) - the membrane proton channel. F(1) has five subunits: alpha(3), beta(3), gamma(1), delta(1), epsilon(1). F(0) has three main subunits: a(1), b(2) and c(10-14). The alpha and beta chains form an alternating ring which encloses part of the gamma chain. F(1) is attached to F(0) by a central stalk formed by the gamma and epsilon chains, while a peripheral stalk is formed by the delta and b chains.

Its subcellular location is the cell inner membrane. Functionally, f(1)F(0) ATP synthase produces ATP from ADP in the presence of a proton or sodium gradient. F-type ATPases consist of two structural domains, F(1) containing the extramembraneous catalytic core and F(0) containing the membrane proton channel, linked together by a central stalk and a peripheral stalk. During catalysis, ATP synthesis in the catalytic domain of F(1) is coupled via a rotary mechanism of the central stalk subunits to proton translocation. This protein is part of the stalk that links CF(0) to CF(1). It either transmits conformational changes from CF(0) to CF(1) or is implicated in proton conduction. The sequence is that of ATP synthase subunit delta from Brucella canis (strain ATCC 23365 / NCTC 10854 / RM-666).